Here is a 2076-residue protein sequence, read N- to C-terminus: Protein Ycf2 (2076 aa).

1458-1465 provides a ligand contact to ATP; sequence GSIGTGRS.

It belongs to the Ycf2 family.

It is found in the plastid. The protein resides in the chloroplast stroma. Functionally, probable ATPase of unknown function. Its presence in a non-photosynthetic plant (Epifagus virginiana) and experiments in tobacco indicate that it has an essential function which is probably not related to photosynthesis. In Acorus calamus (Sweet flag), this protein is Protein Ycf2.